We begin with the raw amino-acid sequence, 184 residues long: Holliday junction branch migration complex subunit RuvA (184 aa).

Residues 1 to 64 (MIKAIEGVVT…EDANLLYGFL (64 aa)) form a domain I region. Positions 65 to 134 (DANEQKMFEM…IAELSDTKLI (70 aa)) are domain II. A flexible linker region spans residues 134-137 (ISDE). The domain III stretch occupies residues 138–184 (SVPSYQNEALLALEALGFKREKIVKILPDCKSENTSDLIKEALKKLG).

Belongs to the RuvA family. As to quaternary structure, homotetramer. Forms an RuvA(8)-RuvB(12)-Holliday junction (HJ) complex. HJ DNA is sandwiched between 2 RuvA tetramers; dsDNA enters through RuvA and exits via RuvB. An RuvB hexamer assembles on each DNA strand where it exits the tetramer. Each RuvB hexamer is contacted by two RuvA subunits (via domain III) on 2 adjacent RuvB subunits; this complex drives branch migration. In the full resolvosome a probable DNA-RuvA(4)-RuvB(12)-RuvC(2) complex forms which resolves the HJ.

It is found in the cytoplasm. The RuvA-RuvB-RuvC complex processes Holliday junction (HJ) DNA during genetic recombination and DNA repair, while the RuvA-RuvB complex plays an important role in the rescue of blocked DNA replication forks via replication fork reversal (RFR). RuvA specifically binds to HJ cruciform DNA, conferring on it an open structure. The RuvB hexamer acts as an ATP-dependent pump, pulling dsDNA into and through the RuvAB complex. HJ branch migration allows RuvC to scan DNA until it finds its consensus sequence, where it cleaves and resolves the cruciform DNA. This is Holliday junction branch migration complex subunit RuvA from Campylobacter concisus (strain 13826).